A 935-amino-acid chain; its full sequence is C-1-tetrahydrofolate synthase, cytoplasmic (935 aa).

M1 carries the N-acetylmethionine modification. Residues A2–A291 are methylenetetrahydrofolate dehydrogenase and methenyltetrahydrofolate cyclohydrolase (D/C) domain. Substrate contacts are provided by residues Y52–K56 and V99–L101. K56 is a catalytic residue. NADP(+) is bound by residues G172–S174 and S197. A substrate-binding site is contributed by P272–G276. The formyltetrahydrofolate synthetase domain stretch occupies residues L310–F935. S318 bears the Phosphoserine mark. T380 to S387 provides a ligand contact to ATP. Phosphoserine is present on residues S413 and S490.

This sequence in the N-terminal section; belongs to the tetrahydrofolate dehydrogenase/cyclohydrolase family. The protein in the C-terminal section; belongs to the formate--tetrahydrofolate ligase family. Homodimer.

It localises to the cytoplasm. The enzyme catalyses (6R)-5,10-methylene-5,6,7,8-tetrahydrofolate + NADP(+) = (6R)-5,10-methenyltetrahydrofolate + NADPH. It carries out the reaction (6R)-5,10-methenyltetrahydrofolate + H2O = (6R)-10-formyltetrahydrofolate + H(+). It catalyses the reaction (6S)-5,6,7,8-tetrahydrofolate + formate + ATP = (6R)-10-formyltetrahydrofolate + ADP + phosphate. It participates in one-carbon metabolism; tetrahydrofolate interconversion. Functionally, trifunctional enzyme that catalyzes the interconversion of three forms of one-carbon-substituted tetrahydrofolate: (6R)-5,10-methylene-5,6,7,8-tetrahydrofolate, 5,10-methenyltetrahydrofolate and (6S)-10-formyltetrahydrofolate. These derivatives of tetrahydrofolate are differentially required in nucleotide and amino acid biosynthesis, (6S)-10-formyltetrahydrofolate being required for purine biosynthesis while (6R)-5,10-methylene-5,6,7,8-tetrahydrofolate is used for serine and methionine biosynthesis for instance. This is C-1-tetrahydrofolate synthase, cytoplasmic (Mthfd1) from Rattus norvegicus (Rat).